A 575-amino-acid polypeptide reads, in one-letter code: Proline--tRNA ligase 1 (575 aa).

This sequence belongs to the class-II aminoacyl-tRNA synthetase family. ProS type 1 subfamily. Homodimer.

The protein localises to the cytoplasm. The enzyme catalyses tRNA(Pro) + L-proline + ATP = L-prolyl-tRNA(Pro) + AMP + diphosphate. Catalyzes the attachment of proline to tRNA(Pro) in a two-step reaction: proline is first activated by ATP to form Pro-AMP and then transferred to the acceptor end of tRNA(Pro). As ProRS can inadvertently accommodate and process non-cognate amino acids such as alanine and cysteine, to avoid such errors it has two additional distinct editing activities against alanine. One activity is designated as 'pretransfer' editing and involves the tRNA(Pro)-independent hydrolysis of activated Ala-AMP. The other activity is designated 'posttransfer' editing and involves deacylation of mischarged Ala-tRNA(Pro). The misacylated Cys-tRNA(Pro) is not edited by ProRS. This chain is Proline--tRNA ligase 1, found in Anaeromyxobacter dehalogenans (strain 2CP-C).